The chain runs to 248 residues: Small ribosomal subunit protein uS2 (248 aa).

This sequence belongs to the universal ribosomal protein uS2 family.

The sequence is that of Small ribosomal subunit protein uS2 from Thiobacillus denitrificans (strain ATCC 25259 / T1).